The following is a 610-amino-acid chain: Ubiquilin-like protein (610 aa).

In terms of domain architecture, Ubiquitin-like spans 31–105 (IRVIVKTPGN…IHVVIKSKHG (75 aa)). In terms of domain architecture, UBA spans 562 to 607 (QAPEVRFSKEMECLQAMGFVNYNANLQALIATDGDTNAAIYKLKSS).

The chain is Ubiquilin-like protein (Ubqlnl) from Mus musculus (Mouse).